A 182-amino-acid chain; its full sequence is Bifunctional dihydrofolate reductase-thymidylate synthase (182 aa).

The DHFR domain maps to 1–182 (AICACCKVLN…YFTRINNAYT (182 aa)). Position 25–31 (25–31 (GLGNAGG)) interacts with NADP(+). Aspartate 40 is a binding site for substrate. NADP(+)-binding positions include 93–95 (KTS) and 114–117 (LSRT). The substrate site is built by isoleucine 154, tyrosine 160, and threonine 175. 155-162 (GGASVYKE) serves as a coordination point for NADP(+).

It in the N-terminal section; belongs to the dihydrofolate reductase family. In the C-terminal section; belongs to the thymidylate synthase family. In terms of assembly, homodimer.

It catalyses the reaction (6S)-5,6,7,8-tetrahydrofolate + NADP(+) = 7,8-dihydrofolate + NADPH + H(+). The catalysed reaction is dUMP + (6R)-5,10-methylene-5,6,7,8-tetrahydrofolate = 7,8-dihydrofolate + dTMP. The protein operates within cofactor biosynthesis; tetrahydrofolate biosynthesis; 5,6,7,8-tetrahydrofolate from 7,8-dihydrofolate: step 1/1. In terms of biological role, bifunctional enzyme. Involved in de novo dTMP biosynthesis. Key enzyme in folate metabolism. Catalyzes an essential reaction for de novo glycine and purine synthesis, DNA precursor synthesis, and for the conversion of dUMP to dTMP. In Plasmodium vinckei, this protein is Bifunctional dihydrofolate reductase-thymidylate synthase.